The primary structure comprises 256 residues: Small ribosomal subunit protein uS2 (256 aa).

It belongs to the universal ribosomal protein uS2 family.

The sequence is that of Small ribosomal subunit protein uS2 from Brucella anthropi (strain ATCC 49188 / DSM 6882 / CCUG 24695 / JCM 21032 / LMG 3331 / NBRC 15819 / NCTC 12168 / Alc 37) (Ochrobactrum anthropi).